We begin with the raw amino-acid sequence, 90 residues long: Defensin-like protein 193 (90 aa).

The N-terminal stretch at 1–27 (MAMKSVSTLAVFAILFLVIVEMPEIKA) is a signal peptide. Intrachain disulfides connect Cys32-Cys86, Cys45-Cys69, Cys54-Cys81, and Cys58-Cys83.

The protein belongs to the DEFL family. Protease inhibitor I18 (RTI/MTI-2) subfamily.

Its subcellular location is the secreted. This chain is Defensin-like protein 193 (ATTI2), found in Arabidopsis thaliana (Mouse-ear cress).